Consider the following 258-residue polypeptide: Ribosomal RNA small subunit methyltransferase J (258 aa).

S-adenosyl-L-methionine contacts are provided by residues 123-124 and Asp-177; that span reads ER. The interval 232-258 is disordered; that stretch reads IDGPKPSHSLEGKSSRYDIYPKKALKA. Residues 239–252 are compositionally biased toward basic and acidic residues; sequence HSLEGKSSRYDIYP.

It belongs to the methyltransferase superfamily. RsmJ family.

The protein localises to the cytoplasm. The catalysed reaction is guanosine(1516) in 16S rRNA + S-adenosyl-L-methionine = N(2)-methylguanosine(1516) in 16S rRNA + S-adenosyl-L-homocysteine + H(+). Functionally, specifically methylates the guanosine in position 1516 of 16S rRNA. This Pseudomonas putida (strain GB-1) protein is Ribosomal RNA small subunit methyltransferase J.